The sequence spans 268 residues: Undecaprenyl-diphosphatase (268 aa).

Transmembrane regions (helical) follow at residues 4–24 (STTLVALVLGLLEGLTEFIPV), 50–70 (IQLGAVLAVLTVYAAKLVSVI), 84–104 (VAVLVAFLPAVVIGVLAHGFI), 109–129 (FETPILIATMLILGGIVLLFV), 144–164 (LPLNVALKIGFIQCLAMVPGV), 185–205 (AEFSFFLSMPTMAGAFAFDLF), 214–234 (SALGEIAVGFVAAFVAAVLVV), and 247–267 (ALFGWWRIAVGSVALAALLAG).

The protein belongs to the UppP family.

Its subcellular location is the cell inner membrane. The enzyme catalyses di-trans,octa-cis-undecaprenyl diphosphate + H2O = di-trans,octa-cis-undecaprenyl phosphate + phosphate + H(+). In terms of biological role, catalyzes the dephosphorylation of undecaprenyl diphosphate (UPP). Confers resistance to bacitracin. This is Undecaprenyl-diphosphatase from Cereibacter sphaeroides (strain ATCC 17029 / ATH 2.4.9) (Rhodobacter sphaeroides).